The following is a 568-amino-acid chain: Probable pectinesterase/pectinesterase inhibitor 23 (568 aa).

An N-terminal signal peptide occupies residues 1-33 (MGSDGDKKKKFIVAGSVSGFLVIMVVSVAVVTS). The segment at 45-198 (RKTTKAVQAV…RELSSNSLAM (154 aa)) is pectinesterase inhibitor 23. N-linked (GlcNAc...) asparagine glycans are attached at residues Asn94, Asn210, and Asn316. The segment at 251 to 548 (PGPVKANAVV…PQDALLYTGD (298 aa)) is pectinesterase 23. Substrate contacts are provided by Thr333 and Gln363. The active-site Proton donor; for pectinesterase activity is the Asp386. Cysteines 400 and 420 form a disulfide. The active-site Nucleophile; for pectinesterase activity is Asp407. Substrate contacts are provided by Arg475 and Trp477.

The protein in the N-terminal section; belongs to the PMEI family. It in the C-terminal section; belongs to the pectinesterase family. In terms of tissue distribution, expressed in mature pollen grains in the anthers and on the stigma. Found in pollen tubes within the style.

The protein localises to the secreted. It localises to the cell wall. It carries out the reaction [(1-&gt;4)-alpha-D-galacturonosyl methyl ester](n) + n H2O = [(1-&gt;4)-alpha-D-galacturonosyl](n) + n methanol + n H(+). The protein operates within glycan metabolism; pectin degradation; 2-dehydro-3-deoxy-D-gluconate from pectin: step 1/5. Its function is as follows. Acts in the modification of cell walls via demethylesterification of cell wall pectin. The chain is Probable pectinesterase/pectinesterase inhibitor 23 (PME23) from Arabidopsis thaliana (Mouse-ear cress).